A 519-amino-acid polypeptide reads, in one-letter code: Chloroethene reductive dehalogenase (519 aa).

The tat-type signal signal peptide spans Met1–Ser43. 4Fe-4S ferredoxin-type domains lie at Pro388 to Glu420 and Leu435 to Ala465. Residues Cys400, Cys403, Cys406, Cys410, Cys444, Cys448, Cys451, and Cys455 each contribute to the [4Fe-4S] cluster site.

This sequence belongs to the PceA family. [4Fe-4S] cluster serves as cofactor. Corrinoid is required as a cofactor. In terms of processing, predicted to be exported by the Tat system. The position of the signal peptide cleavage has been experimentally proven.

The protein localises to the cell membrane. It carries out the reaction chloroethene + AH2 = ethene + chloride + A + H(+). The enzyme catalyses (Z)-1,2-dichloroethene + AH2 = chloroethene + chloride + A + H(+). The catalysed reaction is 1,1-dichloroethene + AH2 = chloroethene + chloride + A + H(+). Catalyzes the reductive dechlorination of chloroethene (or vinyl chloride, VC) to ethene. Can also reduce all dichloroethene (DCE) isomers, but not tetrachloroethene (PCE) or trichloroethene (TCE), at high rates. Reduced methyl viologen can act as the artificial electron donor. The chain is Chloroethene reductive dehalogenase from Dehalococcoides mccartyi (strain VS).